Consider the following 187-residue polypeptide: Adenine phosphoribosyltransferase (187 aa).

Belongs to the purine/pyrimidine phosphoribosyltransferase family. In terms of assembly, homodimer.

The protein localises to the cytoplasm. It catalyses the reaction AMP + diphosphate = 5-phospho-alpha-D-ribose 1-diphosphate + adenine. It participates in purine metabolism; AMP biosynthesis via salvage pathway; AMP from adenine: step 1/1. Functionally, catalyzes a salvage reaction resulting in the formation of AMP, that is energically less costly than de novo synthesis. In Paracoccus denitrificans (strain Pd 1222), this protein is Adenine phosphoribosyltransferase.